The chain runs to 753 residues: Serine/threonine-protein phosphatase with EF-hands 2 (753 aa).

The IQ domain maps to 21–46; the sequence is KAAALIQRWYRRYVARLEMRRRCTWS. The tract at residues 128–540 is catalytic; that stretch reads ATALVEAFRL…PHIVQYQANK (413 aa). Mn(2+) contacts are provided by D179, H181, D208, and N240. The Proton donor role is filled by H241. Residue H292 coordinates Mn(2+). Disordered stretches follow at residues 318–382 and 409–435; these read CKTR…GSLD and VTGE…KPTQ. Positions 322-333 are enriched in basic and acidic residues; it reads QKSEKQMEEKRR. Low complexity predominate over residues 348–361; that stretch reads LPESRSLPSSPLRL. A compositionally biased stretch (polar residues) spans 366-377; sequence AQKTSRSSSIPC. A Mn(2+)-binding site is contributed by H488. EF-hand domains follow at residues 568-603, 652-687, and 692-727; these read AHSS…VLHL, RNRS…FSSH, and ITDD…VEKS. Ca(2+) is bound by residues D665, D667, S669, E676, D705, N707, D709, H711, and E716. The interval 732–753 is disordered; it reads DASECPQATNAKDSGCSSPGAH. A compositionally biased stretch (polar residues) spans 737–753; the sequence is PQATNAKDSGCSSPGAH.

The protein belongs to the PPP phosphatase family. It depends on Mn(2+) as a cofactor. Retinal specific.

Its subcellular location is the cytoplasm. The protein localises to the cell projection. It localises to the cilium. It is found in the photoreceptor outer segment. The protein resides in the photoreceptor inner segment. It catalyses the reaction O-phospho-L-seryl-[protein] + H2O = L-seryl-[protein] + phosphate. The enzyme catalyses O-phospho-L-threonyl-[protein] + H2O = L-threonyl-[protein] + phosphate. Its activity is regulated as follows. Activated by calcium. May play a role in phototransduction. May dephosphorylate photoactivated rhodopsin. May function as a calcium sensing regulator of ionic currents, energy production or synaptic transmission. This chain is Serine/threonine-protein phosphatase with EF-hands 2 (PPEF2), found in Homo sapiens (Human).